Reading from the N-terminus, the 353-residue chain is MADKRFFEAKEPLSLGEIAGRIGAALADADDGSRIVTGVAPLDTAGSNDLSFLDNPKYAEAFYATAAGACIVHPRFAERAPDNVALILSDQPYRAYALVAQIFHPDEAHGADTFGARGEIHPRATVHPTAKLGTGVTLEPGVTIGAGVEIGNNTVIGTNTSVGKGCTVGKDCFIGPNVTLSHAHLGDRVMVHPGVRIGQDGFGFAMGLPRHEKVPQLGRVIVQDDVEIGANSTVDRGAGPDTVIGEGTKIDNLVQIGHNVEIGRGCIIVSQTGIAGSTKLGDFVVLAAQVGVTGHLTINSGAQIAARGAVVHDVPAGQQYGGVPAKPIAEWRREVVELRKLGRRRRSGTKADD.

Catalysis depends on histidine 258, which acts as the Proton acceptor.

Belongs to the transferase hexapeptide repeat family. LpxD subfamily. Homotrimer.

It catalyses the reaction a UDP-3-O-[(3R)-3-hydroxyacyl]-alpha-D-glucosamine + a (3R)-hydroxyacyl-[ACP] = a UDP-2-N,3-O-bis[(3R)-3-hydroxyacyl]-alpha-D-glucosamine + holo-[ACP] + H(+). The protein operates within bacterial outer membrane biogenesis; LPS lipid A biosynthesis. Functionally, catalyzes the N-acylation of UDP-3-O-acylglucosamine using 3-hydroxyacyl-ACP as the acyl donor. Is involved in the biosynthesis of lipid A, a phosphorylated glycolipid that anchors the lipopolysaccharide to the outer membrane of the cell. In Parvibaculum lavamentivorans (strain DS-1 / DSM 13023 / NCIMB 13966), this protein is UDP-3-O-acylglucosamine N-acyltransferase.